A 50-amino-acid chain; its full sequence is Phospholipase A2 trimorphin (50 aa).

The Ca(2+) site is built by Y28, G30, and G32. C29 and C45 are disulfide-bonded. H48 is a catalytic residue. Residue D49 participates in Ca(2+) binding.

Ca(2+) serves as cofactor. In terms of tissue distribution, expressed by the venom gland.

Its subcellular location is the secreted. The catalysed reaction is a 1,2-diacyl-sn-glycero-3-phosphocholine + H2O = a 1-acyl-sn-glycero-3-phosphocholine + a fatty acid + H(+). Its activity is regulated as follows. Inhibited by EDTA. Its function is as follows. PLA2 catalyzes the calcium-dependent hydrolysis of the 2-acyl groups in 3-sn-phosphoglycerides. This chain is Phospholipase A2 trimorphin, found in Trimorphodon lambda (Sonoran lyre snake).